A 534-amino-acid polypeptide reads, in one-letter code: Nucleolar protein 58 (534 aa).

At Thr34 the chain carries Phosphothreonine. The residue at position 109 (Ser109) is a Phosphoserine. Lys157 participates in a covalent cross-link: Glycyl lysine isopeptide (Lys-Gly) (interchain with G-Cter in SUMO2). Positions Ile282–Asp400 constitute a Nop domain. Phosphoserine occurs at positions 304 and 351. Residues Lys353, Lys411, Lys415, Lys422, Lys426, Lys441, Lys444, and Lys465 each participate in a glycyl lysine isopeptide (Lys-Gly) (interchain with G-Cter in SUMO2) cross-link. Lys467 is covalently cross-linked (Glycyl lysine isopeptide (Lys-Gly) (interchain with G-Cter in SUMO); alternate). Lys467 participates in a covalent cross-link: Glycyl lysine isopeptide (Lys-Gly) (interchain with G-Cter in SUMO1); alternate. Residue Lys467 forms a Glycyl lysine isopeptide (Lys-Gly) (interchain with G-Cter in SUMO2); alternate linkage. The segment covering Val470–Glu486 has biased composition (acidic residues). Residues Val470 to Asp534 form a disordered region. Lys490 is covalently cross-linked (Glycyl lysine isopeptide (Lys-Gly) (interchain with G-Cter in SUMO2)). The span at Lys490 to His500 shows a compositional bias: basic residues. Residue Lys502 forms a Glycyl lysine isopeptide (Lys-Gly) (interchain with G-Cter in SUMO); alternate linkage. A Glycyl lysine isopeptide (Lys-Gly) (interchain with G-Cter in SUMO2); alternate cross-link involves residue Lys502. Phosphoserine occurs at positions 507 and 519. Basic residues predominate over residues Lys522–Asp534.

It belongs to the NOP5/NOP56 family. As to quaternary structure, core component of box C/D small nucleolar ribonucleoprotein (snoRNP) particles; the core proteins SNU13, NOP56, NOP58 and FBL or FBLL1 assemble stepwise onto the snoRNA. Interacts with NOLC1/Nopp140. Interacts with NOPCHAP1, NUFIP1, RUVBL1 and RUVBL2; NOPCHAP1 bridges the association of NOP58 with RUVBL1:RUVBL2 and NUFIP1. Interacts with PIH1D1. Part of the small subunit (SSU) processome, composed of more than 70 proteins and the RNA chaperone small nucleolar RNA (snoRNA) U3. Sumoylation is essential for high-affinity binding to snoRNAs.

The protein localises to the nucleus. It localises to the nucleolus. It is found in the nucleoplasm. Functionally, required for the biogenesis of box C/D snoRNAs such as U3, U8 and U14 snoRNAs. Part of the small subunit (SSU) processome, first precursor of the small eukaryotic ribosomal subunit. During the assembly of the SSU processome in the nucleolus, many ribosome biogenesis factors, an RNA chaperone and ribosomal proteins associate with the nascent pre-rRNA and work in concert to generate RNA folding, modifications, rearrangements and cleavage as well as targeted degradation of pre-ribosomal RNA by the RNA exosome. Core component of box C/D small nucleolar ribonucleoprotein (snoRNP) complexes that function in methylation of multiple sites on ribosomal RNAs (rRNAs) and messenger RNAs (mRNAs). The chain is Nucleolar protein 58 (Nop58) from Rattus norvegicus (Rat).